The following is a 430-amino-acid chain: Gamma-glutamyl phosphate reductase (430 aa).

This sequence belongs to the gamma-glutamyl phosphate reductase family.

It is found in the cytoplasm. The enzyme catalyses L-glutamate 5-semialdehyde + phosphate + NADP(+) = L-glutamyl 5-phosphate + NADPH + H(+). The protein operates within amino-acid biosynthesis; L-proline biosynthesis; L-glutamate 5-semialdehyde from L-glutamate: step 2/2. Its function is as follows. Catalyzes the NADPH-dependent reduction of L-glutamate 5-phosphate into L-glutamate 5-semialdehyde and phosphate. The product spontaneously undergoes cyclization to form 1-pyrroline-5-carboxylate. The polypeptide is Gamma-glutamyl phosphate reductase (Psychrobacter arcticus (strain DSM 17307 / VKM B-2377 / 273-4)).